Reading from the N-terminus, the 37-residue chain is Potassium channel toxin alpha-KTx 1.11 (37 aa).

3 cysteine pairs are disulfide-bonded: Cys7–Cys28, Cys13–Cys33, and Cys17–Cys35.

This sequence belongs to the short scorpion toxin superfamily. Potassium channel inhibitor family. Alpha-KTx 01 subfamily. Expressed by the venom gland.

It localises to the secreted. In terms of biological role, reversibly blocks the high conductance calcium-activated potassium channels composed of only alpha subunits (KCa1.1/KCNMA1). Unreversibly blocks the high conductance calcium-activated potassium channels composed of alpha and beta1 subunits (KCNMA1 and KCNMB1). Unreversibly and weakly blocks the high conductance calcium-activated potassium channels composed of alpha and beta4 (KCNMA1 and KCNMB4). This Centruroides noxius (Mexican scorpion) protein is Potassium channel toxin alpha-KTx 1.11.